Reading from the N-terminus, the 511-residue chain is Maturase K (511 aa).

The protein belongs to the intron maturase 2 family. MatK subfamily.

The protein localises to the plastid. It is found in the chloroplast. In terms of biological role, usually encoded in the trnK tRNA gene intron. Probably assists in splicing its own and other chloroplast group II introns. The protein is Maturase K of Acorus calamus var. americanus (American sweet flag).